Reading from the N-terminus, the 582-residue chain is Zinc finger protein 614 (582 aa).

The KRAB domain maps to Leu-8 to Pro-79. Residues His-202–His-224 form a C2H2-type 1 zinc finger. The segment at Lys-254–His-278 adopts a C2H2-type 2; degenerate zinc-finger fold. 10 C2H2-type zinc fingers span residues Tyr-284–His-306, Tyr-312–His-334, Tyr-340–His-362, Tyr-368–His-390, Tyr-396–His-418, Tyr-424–His-446, Tyr-452–His-474, Phe-480–His-502, Tyr-508–His-530, and Tyr-536–His-558.

The protein belongs to the krueppel C2H2-type zinc-finger protein family.

Its subcellular location is the nucleus. Its function is as follows. May be involved in transcriptional regulation. This Macaca fascicularis (Crab-eating macaque) protein is Zinc finger protein 614 (ZNF614).